The chain runs to 397 residues: Tubby-like protein 8 (397 aa).

Residues 1–16 (MAGSRKVNDLLEENKG) show a composition bias toward basic and acidic residues. A disordered region spans residues 1–46 (MAGSRKVNDLLEENKGNVDTITGSLSTQKGEDKENVSPEKVSTSVE). The segment covering 17–28 (NVDTITGSLSTQ) has biased composition (polar residues).

It belongs to the TUB family. In terms of tissue distribution, mostly expressed in roots, flowers and siliques.

This is Tubby-like protein 8 from Arabidopsis thaliana (Mouse-ear cress).